The chain runs to 271 residues: 5-deoxy-glucuronate isomerase (271 aa).

Belongs to the isomerase IolB family.

It catalyses the reaction 5-deoxy-D-glucuronate = 5-dehydro-2-deoxy-D-gluconate. It functions in the pathway polyol metabolism; myo-inositol degradation into acetyl-CoA; acetyl-CoA from myo-inositol: step 4/7. Involved in the isomerization of 5-deoxy-glucuronate (5DG) to 5-dehydro-2-deoxy-D-gluconate (DKG or 2-deoxy-5-keto-D-gluconate). This Lacticaseibacillus casei (Lactobacillus casei) protein is 5-deoxy-glucuronate isomerase.